We begin with the raw amino-acid sequence, 558 residues long: REST corepressor spr-1 (558 aa).

Residues 1-106 (MDLYDDDGES…KVKGPLSNTN (106 aa)) are disordered. A compositionally biased stretch (acidic residues) spans 36–56 (TIEENVPEVEENTLLEEDSLV). Basic residues predominate over residues 69-80 (KPSKSKRKRKRS). The ELM2 domain occupies 107 to 192 (KEINVGTEFQ…SAIAEVARRN (86 aa)). One can recognise an SANT 1 domain in the interval 193–244 (ELKDVWTDQEITLFENCYQIFGKNFSQIRSALCHRSLQSIVQFYYESKKRVK). The GATA-type zinc finger occupies 271–325 (AIFESMCDNCGEKAENMQINNAMNRPECRACLIYFNQTGVPRPTSLRLVLAERIR). Residues 378 to 402 (CTENGNVGETSSPSAQKTEIQSESD) show a composition bias toward polar residues. The interval 378 to 406 (CTENGNVGETSSPSAQKTEIQSESDGSGP) is disordered. Residues 481–532 (HYSQDWTQLERSQVIRCFNMYGAHFEHIADVIGTKTPDQVYQFYLENQKAID) enclose the SANT 2 domain.

The protein belongs to the CoREST family. In terms of assembly, probably part of a large repressor complex. Interacts with histone demethylase spr-5/lsd-1.

It is found in the nucleus. Probable corepressor protein, which probably participates in the transcriptional repression of the presenilin protein hop-1. Probably acts via the formation of a multiprotein complex that deacetylates and demethylates specific sites on histones. Acts redundantly with the transcriptional repressor lin-35 to play a role in vulval morphogenesis and promote germline proliferation. The protein is REST corepressor spr-1 of Caenorhabditis elegans.